Reading from the N-terminus, the 78-residue chain is MVRVIGSLVFGGLILLLASSNAHMVETRFGPLIMLAPHFVVLGITFFLGFAIGIVLVFANVMKRRKHKLPGKNIVIKR.

The first 22 residues, 1 to 22, serve as a signal peptide directing secretion; that stretch reads MVRVIGSLVFGGLILLLASSNA. At 23 to 38 the chain is on the lumenal side; that stretch reads HMVETRFGPLIMLAPH. The chain crosses the membrane as a helical span at residues 39–59; the sequence is FVVLGITFFLGFAIGIVLVFA. Topologically, residues 60–78 are cytoplasmic; it reads NVMKRRKHKLPGKNIVIKR.

It belongs to the magnetosome MamL family.

Its subcellular location is the magnetosome membrane. Functionally, involved in magnetite crystal maturation, but not in magnetosome vesicle tubulation or formation. One of 7 genes (mamLQBIEMO) able to induce magnetosome membrane biogenesis; coexpression of mamLQRBIEMO in a deletion of the 17 gene mamAB operon restores magnetosome vesicle formation but not magnetite biosynthesis. This is Magnetosome protein MamL from Magnetospirillum gryphiswaldense (strain DSM 6361 / JCM 21280 / NBRC 15271 / MSR-1).